A 319-amino-acid chain; its full sequence is Acetyl esterase (319 aa).

An Involved in the stabilization of the negatively charged intermediate by the formation of the oxyanion hole motif is present at residues 91 to 93 (HGG). Catalysis depends on residues Ser165, Asp262, and His292.

It belongs to the 'GDXG' lipolytic enzyme family. As to quaternary structure, homodimer. Interacts with MalT and MelA.

It is found in the cytoplasm. Functionally, displays esterase activity towards short chain fatty esters (acyl chain length of up to 8 carbons). Able to hydrolyze triacetylglycerol (triacetin) and tributyrylglycerol (tributyrin), but not trioleylglycerol (triolein) or cholesterol oleate. Negatively regulates MalT activity by antagonizing maltotriose binding. Inhibits MelA galactosidase activity. This is Acetyl esterase from Shigella boydii serotype 4 (strain Sb227).